Reading from the N-terminus, the 939-residue chain is Isoleucine--tRNA ligase (939 aa).

The short motif at 57-67 is the 'HIGH' region element; it reads PYANGHIHIGH. Residue E563 participates in L-isoleucyl-5'-AMP binding. A 'KMSKS' region motif is present at residues 604–608; sequence KMSKS. K607 contributes to the ATP binding site. The Zn(2+) site is built by C903, C906, C921, and C924.

Belongs to the class-I aminoacyl-tRNA synthetase family. IleS type 1 subfamily. As to quaternary structure, monomer. Requires Zn(2+) as cofactor.

It localises to the cytoplasm. The catalysed reaction is tRNA(Ile) + L-isoleucine + ATP = L-isoleucyl-tRNA(Ile) + AMP + diphosphate. Catalyzes the attachment of isoleucine to tRNA(Ile). As IleRS can inadvertently accommodate and process structurally similar amino acids such as valine, to avoid such errors it has two additional distinct tRNA(Ile)-dependent editing activities. One activity is designated as 'pretransfer' editing and involves the hydrolysis of activated Val-AMP. The other activity is designated 'posttransfer' editing and involves deacylation of mischarged Val-tRNA(Ile). The chain is Isoleucine--tRNA ligase from Sulfurihydrogenibium sp. (strain YO3AOP1).